A 786-amino-acid chain; its full sequence is LPS-assembly protein LptD (786 aa).

The first 24 residues, 1–24 (MKKRIPTLLATMIASALYSHQGLA), serve as a signal peptide directing secretion. 2 cysteine pairs are disulfide-bonded: Cys-31–Cys-726 and Cys-173–Cys-727.

Belongs to the LptD family. In terms of assembly, component of the lipopolysaccharide transport and assembly complex. Interacts with LptE and LptA. Contains two intramolecular disulfide bonds.

Its subcellular location is the cell outer membrane. Its function is as follows. Together with LptE, is involved in the assembly of lipopolysaccharide (LPS) at the surface of the outer membrane. This is LPS-assembly protein LptD from Salmonella choleraesuis (strain SC-B67).